We begin with the raw amino-acid sequence, 393 residues long: Formate-dependent phosphoribosylglycinamide formyltransferase (393 aa).

N(1)-(5-phospho-beta-D-ribosyl)glycinamide is bound by residues 17-18 (EL) and glutamate 77. ATP contacts are provided by residues arginine 109, lysine 150, 155 to 160 (SSGKGQ), 190 to 193 (EEFL), and glutamate 198. The ATP-grasp domain occupies 114 to 304 (DLAAGELGLR…EFELHLRAVL (191 aa)). Positions 263 and 275 each coordinate Mg(2+). N(1)-(5-phospho-beta-D-ribosyl)glycinamide-binding positions include aspartate 282, lysine 354, and 361–362 (RR).

The protein belongs to the PurK/PurT family. Homodimer.

The enzyme catalyses N(1)-(5-phospho-beta-D-ribosyl)glycinamide + formate + ATP = N(2)-formyl-N(1)-(5-phospho-beta-D-ribosyl)glycinamide + ADP + phosphate + H(+). It functions in the pathway purine metabolism; IMP biosynthesis via de novo pathway; N(2)-formyl-N(1)-(5-phospho-D-ribosyl)glycinamide from N(1)-(5-phospho-D-ribosyl)glycinamide (formate route): step 1/1. Its function is as follows. Involved in the de novo purine biosynthesis. Catalyzes the transfer of formate to 5-phospho-ribosyl-glycinamide (GAR), producing 5-phospho-ribosyl-N-formylglycinamide (FGAR). Formate is provided by PurU via hydrolysis of 10-formyl-tetrahydrofolate. The protein is Formate-dependent phosphoribosylglycinamide formyltransferase of Synechococcus sp. (strain RCC307).